Reading from the N-terminus, the 459-residue chain is tRNA modification GTPase MnmE (459 aa).

The (6S)-5-formyl-5,6,7,8-tetrahydrofolate site is built by Arg-23, Glu-85, and Arg-124. Residues 221 to 380 (GLSTAIIGRP…LEKAIADTFF (160 aa)) form the TrmE-type G domain. Asn-231 contacts K(+). GTP is bound by residues 231-236 (NVGKSS), 250-256 (TEIPGTT), and 275-278 (DTAG). Ser-235 serves as a coordination point for Mg(2+). Residues Thr-250, Ile-252, and Thr-255 each contribute to the K(+) site. Thr-256 lines the Mg(2+) pocket. A (6S)-5-formyl-5,6,7,8-tetrahydrofolate-binding site is contributed by Lys-459.

Belongs to the TRAFAC class TrmE-Era-EngA-EngB-Septin-like GTPase superfamily. TrmE GTPase family. As to quaternary structure, homodimer. Heterotetramer of two MnmE and two MnmG subunits. K(+) serves as cofactor.

Its subcellular location is the cytoplasm. Its function is as follows. Exhibits a very high intrinsic GTPase hydrolysis rate. Involved in the addition of a carboxymethylaminomethyl (cmnm) group at the wobble position (U34) of certain tRNAs, forming tRNA-cmnm(5)s(2)U34. This chain is tRNA modification GTPase MnmE, found in Oceanobacillus iheyensis (strain DSM 14371 / CIP 107618 / JCM 11309 / KCTC 3954 / HTE831).